The sequence spans 67 residues: Protein DsrB (67 aa).

Belongs to the DsrB family.

The sequence is that of Protein DsrB from Pectobacterium carotovorum subsp. carotovorum (strain PC1).